The sequence spans 723 residues: Beta-xylosidase (723 aa).

Residues 1–19 (MKKLWLMGLLLASFFTTVA) form the signal peptide.

Belongs to the glycosyl hydrolase 3 family.

It localises to the periplasm. In terms of biological role, xylosidase involved in ulvan degradation. Ulvan is the main polysaccharide component of the Ulvales (green seaweed) cell wall. It is composed of disaccharide building blocks comprising 3-sulfated rhamnose (Rha3S) linked to D-glucuronic acid (GlcA), L-iduronic acid (IduA), or D-xylose (Xyl). Beta-xylosidase converts Xyl-Rha3S, a product of alpha-L-rhamnosidase acting on Rha-Xyl-Rha3S oligosaccharides, further to Xyl and Rha3S. The enzyme is able to degrade 4-methylumbelliferyl-beta-D-xylopyranoside (MUX) in vitro. The chain is Beta-xylosidase from Formosa agariphila (strain DSM 15362 / KCTC 12365 / LMG 23005 / KMM 3901 / M-2Alg 35-1).